Here is a 215-residue protein sequence, read N- to C-terminus: 3-demethoxyubiquinol 3-hydroxylase (215 aa).

The Fe cation site is built by Glu64, Glu94, His97, Glu146, Glu178, and His181.

The protein belongs to the COQ7 family. It depends on Fe cation as a cofactor.

The protein resides in the cell membrane. It carries out the reaction a 5-methoxy-2-methyl-3-(all-trans-polyprenyl)benzene-1,4-diol + AH2 + O2 = a 3-demethylubiquinol + A + H2O. It participates in cofactor biosynthesis; ubiquinone biosynthesis. In terms of biological role, catalyzes the hydroxylation of 2-nonaprenyl-3-methyl-6-methoxy-1,4-benzoquinol during ubiquinone biosynthesis. This chain is 3-demethoxyubiquinol 3-hydroxylase, found in Pseudomonas paraeruginosa (strain DSM 24068 / PA7) (Pseudomonas aeruginosa (strain PA7)).